The primary structure comprises 353 residues: Dimethylsulfoniopropionate lyase 2 (353 aa).

Active-site proton donor/acceptor residues include Cys-125 and Cys-274. Positions 326–353 are disordered; it reads DPNETDVSKGRPTKAEHRFGPEFEEMLQ. Basic and acidic residues predominate over residues 331–346; sequence DVSKGRPTKAEHRFGP.

The protein belongs to the aspartate/glutamate racemases family. ALMA1 subfamily. As to quaternary structure, homotetramer.

The catalysed reaction is S,S-dimethyl-beta-propiothetin = acrylate + dimethyl sulfide + H(+). Its function is as follows. Mediates cleavage of dimethylsulfoniopropionate (DMSP) into dimethyl sulfide (DMS) and acrylate. DMS is the principal form by which sulfur is transported from oceans to the atmosphere and is a key component of the ocean sulfur cycle. In Emiliania huxleyi (strain CCMP1516), this protein is Dimethylsulfoniopropionate lyase 2.